We begin with the raw amino-acid sequence, 182 residues long: Large ribosomal subunit protein uL6 (182 aa).

The protein belongs to the universal ribosomal protein uL6 family. As to quaternary structure, part of the 50S ribosomal subunit.

Its function is as follows. This protein binds to the 23S rRNA, and is important in its secondary structure. It is located near the subunit interface in the base of the L7/L12 stalk, and near the tRNA binding site of the peptidyltransferase center. In Pelotomaculum thermopropionicum (strain DSM 13744 / JCM 10971 / SI), this protein is Large ribosomal subunit protein uL6.